The sequence spans 609 residues: Alpha-glycerophosphate oxidase (609 aa).

D21–E49 contributes to the FAD binding site.

It belongs to the FAD-dependent glycerol-3-phosphate dehydrogenase family. FAD is required as a cofactor.

It is found in the cytoplasm. It carries out the reaction sn-glycerol 3-phosphate + O2 = dihydroxyacetone phosphate + H2O2. In Lactococcus lactis subsp. lactis (strain IL1403) (Streptococcus lactis), this protein is Alpha-glycerophosphate oxidase (glpO).